The primary structure comprises 158 residues: NADH-quinone oxidoreductase subunit B (158 aa).

[4Fe-4S] cluster contacts are provided by Cys37, Cys38, Cys102, and Cys132.

Belongs to the complex I 20 kDa subunit family. NDH-1 is composed of 14 different subunits. Subunits NuoB, C, D, E, F, and G constitute the peripheral sector of the complex. [4Fe-4S] cluster is required as a cofactor.

It localises to the cell inner membrane. The enzyme catalyses a quinone + NADH + 5 H(+)(in) = a quinol + NAD(+) + 4 H(+)(out). NDH-1 shuttles electrons from NADH, via FMN and iron-sulfur (Fe-S) centers, to quinones in the respiratory chain. The immediate electron acceptor for the enzyme in this species is believed to be ubiquinone. Couples the redox reaction to proton translocation (for every two electrons transferred, four hydrogen ions are translocated across the cytoplasmic membrane), and thus conserves the redox energy in a proton gradient. The sequence is that of NADH-quinone oxidoreductase subunit B from Thioalkalivibrio sulfidiphilus (strain HL-EbGR7).